Consider the following 404-residue polypeptide: MKKIYDLWVRVSLIKKIGIGVVIGVMLGILAPDLTGFSILGKLFVGGLKAIAPLLVFALVSQAISHQKKGKQTNMTLIIVLYLFGTFASALVAVLTAYLFPLTLVLNTPVNTELSPPQGVAEVFQSLLLKLVDNPINALATANYIGVLSWAIIFGLALKAASKETKHLIKTAAEVTSQIVVWIINLAPIGIMSLVFTTISENGVGILSDYAFLILVLVGTMLFVALVVNPLIAVLITRQNPYPLVLRCLRESGLTAFFTRSSAANIPVNMQLCQKIGLSKDTYSVSIPLGATINMGGAAITINVLTLAAVHTFGIPIDFLTALLLSVVAAVSACGASGVAGGSLLLIPVACSLFGISNDLAMQVVGVGFIVGVIQDSCETALNSSTDVLFTAIAENAFWKRKKA.

Transmembrane regions (helical) follow at residues 17–37 (IGIG…LTGF), 39–59 (ILGK…VFAL), 75–95 (MTLI…VAVL), 138–158 (ALAT…GLAL), 179–199 (IVVW…FTTI), 212–232 (FLIL…NPLI), 287–307 (IPLG…VLTL), and 313–333 (FGIP…AVSA).

This sequence belongs to the dicarboxylate/amino acid:cation symporter (DAACS) (TC 2.A.23) family.

The protein resides in the cell membrane. The enzyme catalyses L-serine(in) + Na(+)(in) = L-serine(out) + Na(+)(out). It carries out the reaction L-threonine(in) + Na(+)(in) = L-threonine(out) + Na(+)(out). Functionally, involved in the import of serine and threonine into the cell, with the concomitant import of sodium (symport system). This chain is Serine/threonine transporter SstT, found in Streptococcus pyogenes serotype M1.